Reading from the N-terminus, the 55-residue chain is Large ribosomal subunit protein bL33 (55 aa).

It belongs to the bacterial ribosomal protein bL33 family.

This chain is Large ribosomal subunit protein bL33, found in Aromatoleum aromaticum (strain DSM 19018 / LMG 30748 / EbN1) (Azoarcus sp. (strain EbN1)).